We begin with the raw amino-acid sequence, 264 residues long: Regulatory protein RecX (264 aa).

Belongs to the RecX family.

The protein resides in the cytoplasm. Its function is as follows. Modulates RecA activity. In Lacticaseibacillus casei (strain BL23) (Lactobacillus casei), this protein is Regulatory protein RecX.